Reading from the N-terminus, the 286-residue chain is Translocon-associated protein subunit alpha (286 aa).

A signal peptide spans 1–21 (MRLLPRLLLLLLLVFPATVLL). The Lumenal portion of the chain corresponds to 22–207 (RGGPGGSLAE…EREDGLDGQT (186 aa)). The interval 28–83 (SLAEAQDLSEDEETVEDSVIEDEDDEAEVEEDEPTDLAEDREEEDVSGEPEASPSA) is disordered. Acidic residues predominate over residues 34-75 (DLSEDEETVEDSVIEDEDDEAEVEEDEPTDLAEDREEEDVSG). Residues asparagine 136 and asparagine 191 are each glycosylated (N-linked (GlcNAc...) asparagine). The helical transmembrane segment at 208 to 228 (IFMYMSLAGLGLLVVVGLHQL) threads the bilayer. Topologically, residues 229-286 (LESRNRKRPIQKVEMGTSSQNDVDMSWIPQETLNQINKASPRRLPRKRPQKRSVGSDE) are cytoplasmic. Serine 247 is subject to Phosphoserine. A Phosphothreonine modification is found at threonine 260. Residues 264–286 (INKASPRRLPRKRPQKRSVGSDE) form a disordered region. Serine 268 is modified (phosphoserine). Positions 268 to 279 (SPRRLPRKRPQK) are enriched in basic residues.

This sequence belongs to the TRAP-alpha family. In terms of assembly, heterotetramer of TRAP-alpha, TRAP-beta, TRAP-delta and TRAP-gamma. Interacts with palmitoylated calnexin (CALX), the interaction is required for efficient folding of glycosylated proteins. In terms of processing, phosphorylated in its cytoplasmic tail.

It is found in the endoplasmic reticulum membrane. TRAP proteins are part of a complex whose function is to bind calcium to the ER membrane and thereby regulate the retention of ER resident proteins. May be involved in the recycling of the translocation apparatus after completion of the translocation process or may function as a membrane-bound chaperone facilitating folding of translocated proteins. This Oryctolagus cuniculus (Rabbit) protein is Translocon-associated protein subunit alpha (SSR1).